Consider the following 492-residue polypeptide: N-succinylglutamate 5-semialdehyde dehydrogenase (492 aa).

Residue 220–225 participates in NAD(+) binding; it reads GSASTG. Catalysis depends on residues Glu243 and Cys277.

It belongs to the aldehyde dehydrogenase family. AstD subfamily.

The enzyme catalyses N-succinyl-L-glutamate 5-semialdehyde + NAD(+) + H2O = N-succinyl-L-glutamate + NADH + 2 H(+). Its pathway is amino-acid degradation; L-arginine degradation via AST pathway; L-glutamate and succinate from L-arginine: step 4/5. Its function is as follows. Catalyzes the NAD-dependent reduction of succinylglutamate semialdehyde into succinylglutamate. The polypeptide is N-succinylglutamate 5-semialdehyde dehydrogenase (Salmonella enteritidis PT4 (strain P125109)).